We begin with the raw amino-acid sequence, 346 residues long: Anthranilate phosphoribosyltransferase (346 aa).

Residues glycine 88, 91–92, threonine 96, 98–101, 116–124, and alanine 128 each bind 5-phospho-alpha-D-ribose 1-diphosphate; these read GD, NIST, and KHGNRAVSS. Glycine 88 provides a ligand contact to anthranilate. Serine 100 lines the Mg(2+) pocket. Anthranilate is bound at residue asparagine 119. Arginine 174 serves as a coordination point for anthranilate. 2 residues coordinate Mg(2+): aspartate 233 and glutamate 234.

This sequence belongs to the anthranilate phosphoribosyltransferase family. In terms of assembly, homodimer. It depends on Mg(2+) as a cofactor.

The catalysed reaction is N-(5-phospho-beta-D-ribosyl)anthranilate + diphosphate = 5-phospho-alpha-D-ribose 1-diphosphate + anthranilate. The protein operates within amino-acid biosynthesis; L-tryptophan biosynthesis; L-tryptophan from chorismate: step 2/5. In terms of biological role, catalyzes the transfer of the phosphoribosyl group of 5-phosphorylribose-1-pyrophosphate (PRPP) to anthranilate to yield N-(5'-phosphoribosyl)-anthranilate (PRA). This chain is Anthranilate phosphoribosyltransferase, found in Paramagnetospirillum magneticum (strain ATCC 700264 / AMB-1) (Magnetospirillum magneticum).